An 887-amino-acid polypeptide reads, in one-letter code: Cytoplasmic aconitate hydratase (887 aa).

Residues Gln-84 and 204-206 (DSH) each bind substrate. [4Fe-4S] cluster-binding residues include Cys-436, Cys-502, and Cys-505. Substrate-binding positions include Arg-535, Arg-540, Arg-697, and 777 to 778 (SR).

The protein belongs to the aconitase/IPM isomerase family. In terms of assembly, interacts with gex-3. [4Fe-4S] cluster is required as a cofactor.

It is found in the cytoplasm. Its subcellular location is the cytosol. It catalyses the reaction citrate = D-threo-isocitrate. Catalyzes the isomerization of citrate to isocitrate via cis-aconitate. Has probably no RNA-binding activity. This chain is Cytoplasmic aconitate hydratase (aco-1), found in Caenorhabditis elegans.